The sequence spans 252 residues: Ribosomal RNA small subunit methyltransferase J (252 aa).

S-adenosyl-L-methionine is bound by residues 101–102 (RD), 117–118 (ER), 153–154 (SS), and D171.

The protein belongs to the methyltransferase superfamily. RsmJ family.

The protein localises to the cytoplasm. The enzyme catalyses guanosine(1516) in 16S rRNA + S-adenosyl-L-methionine = N(2)-methylguanosine(1516) in 16S rRNA + S-adenosyl-L-homocysteine + H(+). Specifically methylates the guanosine in position 1516 of 16S rRNA. The sequence is that of Ribosomal RNA small subunit methyltransferase J from Citrobacter koseri (strain ATCC BAA-895 / CDC 4225-83 / SGSC4696).